Reading from the N-terminus, the 197-residue chain is C4-dicarboxylate transport transcriptional regulatory protein DctR (197 aa).

Residues 4 to 120 enclose the Response regulatory domain; the sequence is TVHIVDDEES…HIVDIALSAI (117 aa). A 4-aspartylphosphate modification is found at D53. Positions 128–135 are inter-domain linker; the sequence is AEAQAREA. Residues 136–197 form the HTH luxR-type domain; sequence VAARRASLSA…RNIADLARMT (62 aa). Positions 160–179 form a DNA-binding region, H-T-H motif; sequence NKQIAERLGIAMRTVEVHRS.

In terms of processing, phosphorylated by DctS.

It is found in the cytoplasm. In terms of biological role, member of the two-component regulatory system DctS/DctR involved in the transport of C4-dicarboxylates. DctR functions as a transcriptional repressor of genes for C4-dicarboxylate transport. This is C4-dicarboxylate transport transcriptional regulatory protein DctR (dctR) from Rhodobacter capsulatus (Rhodopseudomonas capsulata).